Reading from the N-terminus, the 637-residue chain is 1-deoxy-D-xylulose-5-phosphate synthase (637 aa).

Thiamine diphosphate is bound by residues His-76 and 117–119 (GHS). Position 148 (Asp-148) interacts with Mg(2+). Thiamine diphosphate is bound by residues 149 to 150 (GA), Asn-177, Tyr-294, and Glu-381. Residue Asn-177 participates in Mg(2+) binding.

The protein belongs to the transketolase family. DXPS subfamily. As to quaternary structure, homodimer. Mg(2+) is required as a cofactor. Requires thiamine diphosphate as cofactor.

The catalysed reaction is D-glyceraldehyde 3-phosphate + pyruvate + H(+) = 1-deoxy-D-xylulose 5-phosphate + CO2. The protein operates within metabolic intermediate biosynthesis; 1-deoxy-D-xylulose 5-phosphate biosynthesis; 1-deoxy-D-xylulose 5-phosphate from D-glyceraldehyde 3-phosphate and pyruvate: step 1/1. Its function is as follows. Catalyzes the acyloin condensation reaction between C atoms 2 and 3 of pyruvate and glyceraldehyde 3-phosphate to yield 1-deoxy-D-xylulose-5-phosphate (DXP). The sequence is that of 1-deoxy-D-xylulose-5-phosphate synthase from Neisseria gonorrhoeae (strain NCCP11945).